A 197-amino-acid polypeptide reads, in one-letter code: A-type ATP synthase subunit E 2 (197 aa).

It belongs to the V-ATPase E subunit family. Has multiple subunits with at least A(3), B(3), C, D, E, F, H, I and proteolipid K(x).

Its subcellular location is the cell membrane. Functionally, component of the A-type ATP synthase that produces ATP from ADP in the presence of a proton gradient across the membrane. The sequence is that of A-type ATP synthase subunit E 2 from Methanospirillum hungatei JF-1 (strain ATCC 27890 / DSM 864 / NBRC 100397 / JF-1).